The sequence spans 169 residues: NADH-quinone oxidoreductase subunit B (169 aa).

[4Fe-4S] cluster contacts are provided by Cys42, Cys43, Cys107, and Cys136.

It belongs to the complex I 20 kDa subunit family. As to quaternary structure, NDH-1 is composed of 14 different subunits. Subunits NuoB, C, D, E, F, and G constitute the peripheral sector of the complex. [4Fe-4S] cluster is required as a cofactor.

Its subcellular location is the cell inner membrane. The enzyme catalyses a quinone + NADH + 5 H(+)(in) = a quinol + NAD(+) + 4 H(+)(out). Functionally, NDH-1 shuttles electrons from NADH, via FMN and iron-sulfur (Fe-S) centers, to quinones in the respiratory chain. The immediate electron acceptor for the enzyme in this species is believed to be ubiquinone. Couples the redox reaction to proton translocation (for every two electrons transferred, four hydrogen ions are translocated across the cytoplasmic membrane), and thus conserves the redox energy in a proton gradient. The chain is NADH-quinone oxidoreductase subunit B from Sulfurimonas denitrificans (strain ATCC 33889 / DSM 1251) (Thiomicrospira denitrificans (strain ATCC 33889 / DSM 1251)).